The chain runs to 190 residues: Surfactant protein C (190 aa).

A propeptide spanning residues 1–23 (MDVGSKEVLIENPPDYSAAPQGR) is cleaved from the precursor. The S-palmitoyl cysteine moiety is linked to residue C28. The propeptide occupies 59-190 (HMSQKHTEMV…LCGEVPLYYI (132 aa)). The BRICHOS domain maps to 94–190 (FSIGSTGIVV…LCGEVPLYYI (97 aa)). Residues C121 and C182 are joined by a disulfide bond.

It localises to the secreted. It is found in the extracellular space. The protein resides in the surface film. In terms of biological role, pulmonary surfactant associated proteins promote alveolar stability by lowering the surface tension at the air-liquid interface in the peripheral air spaces. The polypeptide is Surfactant protein C (SFTPC) (Neovison vison (American mink)).